A 316-amino-acid chain; its full sequence is Coiled-coil domain-containing protein 42 (316 aa).

Coiled coils occupy residues 43 to 151 (RLLE…EYSI) and 182 to 236 (HHDL…SDVI).

It belongs to the CFAP73 family. In terms of assembly, interacts with ODF1 and ODF2. Interacts with CCDC38. Interacts with CCDC146. Interacts with CFAP53.

Its subcellular location is the cytoplasm. It is found in the perinuclear region. It localises to the cytoskeleton. The protein resides in the cell projection. The protein localises to the cilium. Its subcellular location is the flagellum. It is found in the microtubule organizing center. It localises to the centrosome. Functionally, essential for male fertility. Required for sperm development. The chain is Coiled-coil domain-containing protein 42 from Bos taurus (Bovine).